The chain runs to 196 residues: ATP-dependent Clp protease proteolytic subunit (196 aa).

Ser101 functions as the Nucleophile in the catalytic mechanism. The active site involves His126.

This sequence belongs to the peptidase S14 family. As to quaternary structure, component of the chloroplastic Clp protease core complex.

Its subcellular location is the plastid. It localises to the chloroplast stroma. The catalysed reaction is Hydrolysis of proteins to small peptides in the presence of ATP and magnesium. alpha-casein is the usual test substrate. In the absence of ATP, only oligopeptides shorter than five residues are hydrolyzed (such as succinyl-Leu-Tyr-|-NHMec, and Leu-Tyr-Leu-|-Tyr-Trp, in which cleavage of the -Tyr-|-Leu- and -Tyr-|-Trp bonds also occurs).. Functionally, cleaves peptides in various proteins in a process that requires ATP hydrolysis. Has a chymotrypsin-like activity. Plays a major role in the degradation of misfolded proteins. This is ATP-dependent Clp protease proteolytic subunit from Coffea arabica (Arabian coffee).